Consider the following 732-residue polypeptide: Polyribonucleotide nucleotidyltransferase (732 aa).

The Mg(2+) site is built by D515 and D521. The KH domain maps to 581–641; sequence PKLELFNVDP…KNVDAAKDYI (61 aa). Positions 672-731 constitute an S1 motif domain; the sequence is GDEFTGSVKSVVDFGVFIELKDGVDGLLHISKIKSPLNVGDQVKVCVSEQKGNKISLSLV.

Belongs to the polyribonucleotide nucleotidyltransferase family. Mg(2+) serves as cofactor.

It localises to the cytoplasm. It catalyses the reaction RNA(n+1) + phosphate = RNA(n) + a ribonucleoside 5'-diphosphate. Functionally, involved in mRNA degradation. Catalyzes the phosphorolysis of single-stranded polyribonucleotides processively in the 3'- to 5'-direction. This is Polyribonucleotide nucleotidyltransferase from Campylobacter concisus (strain 13826).